We begin with the raw amino-acid sequence, 1020 residues long: 5'-3' exoribonuclease 3 (1020 aa).

The tract at residues 113-144 (QQRSRRFRSAKDASDAAAEEERLREEFEREGR) is disordered. A compositionally biased stretch (basic and acidic residues) spans 121-144 (SAKDASDAAAEEERLREEFEREGR). Residues 262–279 (ERCFLCGQMGHFASNCEG) form a CCHC-type zinc finger. 2 disordered regions span residues 411–440 (QHQRQAERVKRDKAGKATKRMDDEAPTVQP) and 452–483 (RLASAPTPSPFQSNDGRSAPHQKVRRLSPGSS). The segment covering 414–433 (RQAERVKRDKAGKATKRMDD) has biased composition (basic and acidic residues). Residues 487 to 523 (AIVDVENSLESDERENKEELKTKLKELIREKSDAFNS) are a coiled coil. Positions 831-844 (NNHGMHNNHGMHNN) are enriched in low complexity. 3 disordered regions span residues 831–859 (NNHGMHNNHGMHNNQGRQNPPGSVSGRHL), 875–897 (TDRYQTPTDVPAPGYGYNPPQYV), and 911–1020 (PGAQ…RHRY). 2 stretches are compositionally biased toward low complexity: residues 911–923 (PGAQGYAQPAPYQ) and 960–972 (GNHQNQHQQQQWH). The segment covering 1000 to 1020 (RGRGRGSHHHHDQGGNPRHRY) has biased composition (basic residues).

Belongs to the 5'-3' exonuclease family. XRN2/RAT1 subfamily. Expressed in roots, leaves, stems and flowers.

It localises to the nucleus. Its function is as follows. Possesses 5'-&gt;3' exoribonuclease activity. Acts as an endogenous post-transcriptional gene silencing (PTGS) suppressor. Degrades miRNA-derived loops, excised during miRNA maturation in the nucleus. Required for proper development. Involved in pre-rRNA processing. Involved with XRN2 in the 5'-end exonucleolytic processing of 5.8S and 25S rRNAs. Contributes with XRN2 to polyadenylation-dependent nuclear RNA surveillance. Involved in the degradation of aberrant polyadenylated pre-rRNA through 5'-end processing. This chain is 5'-3' exoribonuclease 3, found in Arabidopsis thaliana (Mouse-ear cress).